Here is a 321-residue protein sequence, read N- to C-terminus: tRNA(Ile)-lysidine synthase (321 aa).

An ATP-binding site is contributed by 30–35 (SGGSDS).

This sequence belongs to the tRNA(Ile)-lysidine synthase family.

The protein resides in the cytoplasm. The catalysed reaction is cytidine(34) in tRNA(Ile2) + L-lysine + ATP = lysidine(34) in tRNA(Ile2) + AMP + diphosphate + H(+). Functionally, ligates lysine onto the cytidine present at position 34 of the AUA codon-specific tRNA(Ile) that contains the anticodon CAU, in an ATP-dependent manner. Cytidine is converted to lysidine, thus changing the amino acid specificity of the tRNA from methionine to isoleucine. The sequence is that of tRNA(Ile)-lysidine synthase from Chlamydia trachomatis serovar D (strain ATCC VR-885 / DSM 19411 / UW-3/Cx).